Here is a 78-residue protein sequence, read N- to C-terminus: Small ribosomal subunit protein bS18 (78 aa).

The protein belongs to the bacterial ribosomal protein bS18 family. Part of the 30S ribosomal subunit. Forms a tight heterodimer with protein bS6.

In terms of biological role, binds as a heterodimer with protein bS6 to the central domain of the 16S rRNA, where it helps stabilize the platform of the 30S subunit. The polypeptide is Small ribosomal subunit protein bS18 (Acidothermus cellulolyticus (strain ATCC 43068 / DSM 8971 / 11B)).